A 377-amino-acid chain; its full sequence is Guanine nucleotide-binding protein subunit beta (377 aa).

WD repeat units lie at residues 63-93 (GHTGKVYSLDWTPEKNRIVSASQDGRLIVWN), 105-135 (LPCAWVMTCAFSPSGQSVACGGLDSACSIFN), 154-185 (GHKGYVSSCQYVPDEDTHLITSSGDQTCVLWD), 202-233 (GHTADVLSVSISSSNPKLFVSGSCDTTARLWD), 246-276 (GHESDVNTVKFFPDGNRFGTGSDDGSCRLFD), 293-323 (GDIPHVTSMAFSISGRLLFVGYSNGDCYVWD), and 339-369 (SHEGRISCLGLSADGSALCTGSWDTNLKIWA).

This sequence belongs to the WD repeat G protein beta family. G proteins are composed of 3 units, alpha, beta and gamma.

In terms of biological role, guanine nucleotide-binding proteins (G proteins) are involved as a modulator or transducer in various transmembrane signaling systems. The beta and gamma chains are required for the GTPase activity, for replacement of GDP by GTP, and for G protein-effector interaction. In Solanum tuberosum (Potato), this protein is Guanine nucleotide-binding protein subunit beta (GB1).